Reading from the N-terminus, the 692-residue chain is Elongation factor G (692 aa).

One can recognise a tr-type G domain in the interval 8 to 283; that stretch reads DKYRNIGIMA…AVVDYMPSPL (276 aa). Residues 17-24, 81-85, and 135-138 each bind GTP; these read AHIDAGKT, DTPGH, and NKMD.

The protein belongs to the TRAFAC class translation factor GTPase superfamily. Classic translation factor GTPase family. EF-G/EF-2 subfamily.

The protein resides in the cytoplasm. Functionally, catalyzes the GTP-dependent ribosomal translocation step during translation elongation. During this step, the ribosome changes from the pre-translocational (PRE) to the post-translocational (POST) state as the newly formed A-site-bound peptidyl-tRNA and P-site-bound deacylated tRNA move to the P and E sites, respectively. Catalyzes the coordinated movement of the two tRNA molecules, the mRNA and conformational changes in the ribosome. This is Elongation factor G from Trichlorobacter lovleyi (strain ATCC BAA-1151 / DSM 17278 / SZ) (Geobacter lovleyi).